The primary structure comprises 372 residues: MEIVRVEPTPSPNTMKIVLNEKRKDNKSNTYTTILDNQPKFINDVLAVDGVKSIFYVMDFLAVDKKPKYDWEVLLPKVTATLSDESESIDTPAPDEHFGEVKAEVLQFKGIPYQVKLTSSSEEKRKQLPEVYIDSMLAAQKDDDNIVFQRKWENLGIRYGELDDIMSEVTEEILALYPEKDLNHLVENALNTDVVIPEKKYQHVTLETYQATDDWKERLRMLKAFPTPTERDFPLLGDAVSEEEKTPLRREAIVLLGMIEDKAVLPYLFKGLHDKSPAVRRTAGDCLSDLGFKQALPEMEKALDDPHKIVRWRAAMFIFDEGGPEQLDALRTHENDPAYEVKLQIEMAIARIENGDEALGSVWKQIANRNKS.

This sequence belongs to the CvfC family.

This Staphylococcus saprophyticus subsp. saprophyticus (strain ATCC 15305 / DSM 20229 / NCIMB 8711 / NCTC 7292 / S-41) protein is Conserved virulence factor C (cvfC).